Reading from the N-terminus, the 527-residue chain is Cytochrome P450 monooxygenase olcJ (527 aa).

Residues 21–43 traverse the membrane as a helical segment; it reads GLLTRYNVFMAISITVTALYLIH. C464 is a binding site for heme.

It belongs to the cytochrome P450 family. It depends on heme as a cofactor.

The protein resides in the membrane. It functions in the pathway secondary metabolite biosynthesis; terpenoid biosynthesis. Cytochrome P450 monooxygenase; part of the gene cluster that mediates the biosynthesis of 15-deoxyoxalicine B. The first step of the pathway is the synthesis of nicotinyl-CoA from nicotinic acid by the nicotinic acid-CoA ligase olcI. Nicotinyl-CoA is then a substrate of polyketide synthase olcA to produce 4-hydroxy-6-(3-pyridinyl)-2H-pyran-2-one (HPPO) which is further prenylated by the polyprenyl transferase olcH to yield geranylgeranyl-HPPO. Geranylgeranyl pyrophosphate is provided by the cluster-specific geranylgeranyl pyrophosphate synthase olcC. The FAD-dependent monooxygenase olcE catalyzes the epoxidation of geranylgeranyl-HPPO and the terpene cyclase olcD catalyzes the cyclization of the terpenoid component, resulting in the formation of the tricyclic terpene moiety seen in predecaturin E. The cytochrome P450 monooxygenase then catalyzes the allylic oxidation of predecaturin E, which is followed by spirocylization with concomitant loss of one molecule of water to form decaturin E. Decaturin E is the substrate of the cytochrome P450 monooxygenase olcJ which hydroxylates it at the C-29 position to form decaturin F. The short-chain dehydrogenase/reductase olcF may catalyze the oxidation of decaturin F to generate the 29-hydroxyl-27-one intermediate, and subsequent hemiacetal formation probably leads to the formation of decaturin C. The dioxygenase olcK may be a peroxisomal enzyme that catalyzes the hydroxylation of decaturin C into decaturin A once decaturin C is shuttled into the peroxisome by the MFS transporter olcL. Finally the cytochrome P450 monooxygenase olcB catalyzes the oxidative rearrangement to yield 15-deoxyoxalicine B. In the absence of olcJ, decaturin E may be shunted to a pathway in which it is oxidized to a ketone, possibly by olcF, to form decaturin D, which undergoes further allylic oxidation to yield decaturin G. Moreover, in the absence of oclK or oclL, oclB can convert decaturin C into 15-deoxyoxalicine A. The chain is Cytochrome P450 monooxygenase olcJ from Penicillium canescens.